The sequence spans 378 residues: TelA-like protein SAB1262 (378 aa).

It belongs to the TelA family.

This is TelA-like protein SAB1262 from Staphylococcus aureus (strain bovine RF122 / ET3-1).